The sequence spans 297 residues: Vacuolar protein sorting-associated protein 26C (297 aa).

This sequence belongs to the VPS26 family. As to quaternary structure, component of the commander complex that is essential for endosomal recycling of transmembrane cargos; the commander complex is composed of the CCC subcomplex and the retriever subcomplex. Component of the heterotrimeric retriever complex consisting of VPS26C, VPS29 and VPS35L; within the complex interacts with VPS35L. Interacts with SNX17 (via C-terminus); the interaction is direct and associates SNX17 with the retriever complex. Interacts with SNX31; the interaction is direct. Ubiquitously expressed.

Its subcellular location is the endosome. In terms of biological role, component of the commander complex that is essential for endosomal recycling of transmembrane cargos; the commander complex is composed of the CCC subcomplex and the retriever subcomplex. Component of the retriever complex, which is a heterotrimeric complex related to retromer cargo-selective complex (CSC) and essential for retromer-independent retrieval and recycling of numerous cargos such as integrin alpha-5/beta-1 (ITGA5:ITGB1). The recruitment of the retriever complex to the endosomal membrane involves CCC and WASH complexes. In the endosomes, drives the retriever and recycling of NxxY-motif-containing cargo proteins by coupling to SNX17, a cargo essential for the homeostatic maintenance of numerous cell surface proteins associated with processes that include cell migration, cell adhesion, nutrient supply and cell signaling. Its function is as follows. (Microbial infection) The heterotrimeric retriever complex, in collaboration with the CCC complex, mediates the exit of human papillomavirus to the cell surface. The protein is Vacuolar protein sorting-associated protein 26C of Homo sapiens (Human).